The sequence spans 421 residues: MGNITKRGSRDLVADGATLVEESLATTLHSKLYEAIIKEDCNTIKTLLRNHPVNQPLTILANSTRYRLLSQQTQPIFPIHLAAEYRKPQSLLCLLQHGADPEVRDAQGFTTLHLMLLNWPASSTTWSKPSTQIQKILMDIQNNAVLCLCILCDHGAQVNARVDNSNKHSALHLAIIHGTYPVLSFLAQNGAQVNATNESSMTPLHMAADILNKNMIETLIAFGANVNCAISSTGNTALKLAVCTASSKVGRLLAAGVGCIRLLLNNGAQVNAQDHEGQTALHEACFGGREAIISLLLEFEANVNILTRNGESPIYMYLQRSSNIRDRSLLARLLYRTYPLRLSNKQGILPAGIMLPEYQLLRETLVKLSKKPLTLEAICKRSIRNVYGEKYKFHLEKLLPAKLWNSIYGIYDLTYLLKGEP.

ANK repeat units lie at residues 27-57 (TLHS…NQPL), 74-103 (QPIF…DPEV), 107-146 (QGFT…NAVL), 166-195 (NKHS…QVNA), 199-228 (SSMT…NVNC), 233-272 (TGNT…QVNA), 276-305 (EGQT…NVNI), and 309-342 (NGES…PLRL).

The sequence is that of Ankyrin repeat domain-containing protein 61 (Ankrd61) from Mus musculus (Mouse).